We begin with the raw amino-acid sequence, 267 residues long: Proteasome subunit alpha (267 aa).

Residues 231 to 267 form a disordered region; it reads ETLLQERDSKESAESEEPIESEEGKKTGKKSDADSSD. Basic and acidic residues-rich tracts occupy residues 234–243 and 252–267; these read LQERDSKESA and EEGK…DSSD.

The protein belongs to the peptidase T1A family. In terms of assembly, the 20S proteasome core is composed of 14 alpha and 14 beta subunits that assemble into four stacked heptameric rings, resulting in a barrel-shaped structure. The two inner rings, each composed of seven catalytic beta subunits, are sandwiched by two outer rings, each composed of seven alpha subunits. The catalytic chamber with the active sites is on the inside of the barrel. Has a gated structure, the ends of the cylinder being occluded by the N-termini of the alpha-subunits. Is capped by the proteasome-associated ATPase, ARC.

Its subcellular location is the cytoplasm. It participates in protein degradation; proteasomal Pup-dependent pathway. Its activity is regulated as follows. The formation of the proteasomal ATPase ARC-20S proteasome complex, likely via the docking of the C-termini of ARC into the intersubunit pockets in the alpha-rings, may trigger opening of the gate for substrate entry. Interconversion between the open-gate and close-gate conformations leads to a dynamic regulation of the 20S proteasome proteolysis activity. Functionally, component of the proteasome core, a large protease complex with broad specificity involved in protein degradation. This chain is Proteasome subunit alpha, found in Mycobacterium ulcerans (strain Agy99).